We begin with the raw amino-acid sequence, 960 residues long: Putative helicase L207/L206 (960 aa).

Residues 1-32 are disordered; sequence MTSKTENKKSVSSKTGRTTNNSTNKKTTEKSV. Residues 12–25 show a composition bias toward low complexity; sequence SSKTGRTTNNSTNK. Residues 646–807 form the SF3 helicase domain; the sequence is SMREYILTLL…FIKHSEATKK (162 aa).

This Acanthamoeba polyphaga mimivirus (APMV) protein is Putative helicase L207/L206.